The chain runs to 111 residues: Ribosome-binding factor A (111 aa).

It belongs to the RbfA family. In terms of assembly, monomer. Binds 30S ribosomal subunits, but not 50S ribosomal subunits or 70S ribosomes.

Its subcellular location is the cytoplasm. In terms of biological role, one of several proteins that assist in the late maturation steps of the functional core of the 30S ribosomal subunit. Associates with free 30S ribosomal subunits (but not with 30S subunits that are part of 70S ribosomes or polysomes). Required for efficient processing of 16S rRNA. May interact with the 5'-terminal helix region of 16S rRNA. This Helicobacter acinonychis (strain Sheeba) protein is Ribosome-binding factor A.